We begin with the raw amino-acid sequence, 334 residues long: Cytoskeleton protein RodZ (334 aa).

Over 1–111 (MNTEATHDQN…LGKRRKKRDG (111 aa)) the chain is Cytoplasmic. One can recognise an HTH cro/C1-type domain in the interval 19-71 (LRNAREQLGLSQQAVAERLCLKVSTVRDIEEDKAPSDLASTFLRGYIRSYARL). Residues 30 to 49 (QQAVAERLCLKVSTVRDIEE) constitute a DNA-binding region (H-T-H motif). A helical; Signal-anchor for type II membrane protein transmembrane segment spans residues 112-132 (WLMSFTWLVLFVVVGLTGAWW). Residues 133–334 (WQNHKAQQEE…TLNAEPTPAQ (202 aa)) are Periplasmic-facing. Disordered stretches follow at residues 155-207 (NADK…ATQN) and 221-241 (ATSA…SQAG). Positions 176–207 (TTPAQTAPAPATPVDSTAATQTPAATATATQN) are enriched in low complexity.

The protein belongs to the RodZ family.

The protein localises to the cell inner membrane. In terms of biological role, cytoskeletal protein that is involved in cell-shape control through regulation of the length of the long axis. This Salmonella schwarzengrund (strain CVM19633) protein is Cytoskeleton protein RodZ.